Reading from the N-terminus, the 21-residue chain is Preblooming protein 2 (21 aa).

In terms of biological role, possible mediator for cell division in the blooming process. This is Preblooming protein 2 from Prorocentrum triestinum (Red tide alga).